Reading from the N-terminus, the 367-residue chain is Cystinosin (367 aa).

Residues 1–22 (MIRNWLTIFILFPLKLVEKCES) form the signal peptide. Residues 23 to 125 (SVSLTVPPVV…LVIRSSAISI (103 aa)) are Lumenal-facing. 3 N-linked (GlcNAc...) (high mannose) asparagine glycosylation sites follow: Asn36, Asn41, and Asn51. Asn66 is a glycosylation site (N-linked (GlcNAc...) asparagine). Asn84, Asn104, and Asn107 each carry an N-linked (GlcNAc...) (high mannose) asparagine glycan. Positions 123–189 (ISIINQVIGW…LLWVPYIKEQ (67 aa)) constitute a PQ-loop 1 domain. Residues 126–150 (INQVIGWIYFVAWSISFYPQVIMNW) form a helical membrane-spanning segment. Topologically, residues 151–159 (RRKSVIGLS) are cytoplasmic. The helical transmembrane segment at 160–179 (FDFVALNLTGFVAYSVFNIG) threads the bilayer. L-cystine is bound at residue Asn166. The Lumenal segment spans residues 180-202 (LLWVPYIKEQFLLKYPNGVNPVN). A helical transmembrane segment spans residues 203–225 (SNDVFFSLHAVVLTLIIIVQCCL). Residue Asp205 participates in H(+) binding. Residues 226-234 (YERGGQRVS) are Cytoplasmic-facing. Residues 235–257 (WPAIGFLVLAWLFAFVTMIVAAV) form a helical membrane-spanning segment. Residues 258–263 (GVTTWL) are Lumenal-facing. The region spanning 263 to 328 (LQFLFCFSYI…QSYNNDQWTL (66 aa)) is the PQ-loop 2 domain. A helical membrane pass occupies residues 264-289 (QFLFCFSYIKLAVTLVKYFPQAYMNF). The L-cystine site is built by Lys273, Lys280, and Tyr281. Residues 290-298 (YYKSTEGWS) are Cytoplasmic-facing. A helical transmembrane segment spans residues 299–308 (IGNVLLDFTG). Residues Asn301 and Asp305 each coordinate L-cystine. Asp305 is a H(+) binding site. The Lumenal portion of the chain corresponds to 309–331 (GSFSLLQMFLQSYNNDQWTLIFG). A helical transmembrane segment spans residues 332 to 354 (DPTKFGLGVFSIVFDVVFFIQHF). Asp346 contacts H(+). Over 355–367 (CLYRKRPGYDQLN) the chain is Cytoplasmic. The short motif at 362–366 (GYDQL) is the Lysosomal targeting motif element.

It belongs to the cystinosin family. Interacts with components of the V-ATPase complex. Interacts with components of the Ragulator complex. Interacts with RRAGA/RagA and RRAGC/RagC. Interacts with AP-3 complex subunit mu (AP3M1 or AP3M2). As to expression, strongly expressed in pancreas, kidney (adult and fetal), skeletal muscle, melanocytes and keratinocytes. Expressed at lower levels in placenta and heart. Weakly expressed in lung, liver and brain (adult and fetal). In terms of tissue distribution, represents 5-20 % of CTNS transcripts, with the exception of the testis that expresses both isoforms in equal proportions.

The protein resides in the lysosome membrane. It is found in the melanosome membrane. Its subcellular location is the cell membrane. The enzyme catalyses L-cystine(out) + H(+)(out) = L-cystine(in) + H(+)(in). Its activity is regulated as follows. Switches between a lumen- and a cytosol-open conformation: pH induces conformational changes and shifts the equilibrium to facilitate the transition between the lumen- and cytosol-open conformation, thereby promoting cystine transport. Protonation of specific aspartate residues (Asp-205, Asp-305 and Asp-346) favors the cytosol-open conformation. Cystine/H(+) symporter that mediates export of cystine, the oxidized dimer of cysteine, from lysosomes. Plays an important role in melanin synthesis by catalyzing cystine export from melanosomes, possibly by inhibiting pheomelanin synthesis. In addition to cystine export, also acts as a positive regulator of mTORC1 signaling in kidney proximal tubular cells, via interactions with components of the v-ATPase and Ragulator complexes. Also involved in small GTPase-regulated vesicle trafficking and lysosomal localization of LAMP2A, independently of cystine transporter activity. The sequence is that of Cystinosin from Homo sapiens (Human).